Consider the following 529-residue polypeptide: MKPHLKQWRQRMLFGIFAWGLLFLLIFIYFTDSNPAEPVPSSLSFLETRRLLPVQGKQRAIMGAAHEPSPPGGLDARQALPRAHPAGSFHAGPGDLQKWAQSQDGFEHKEFFSSQVGRKSQSAFYPEDDDYFFAAGQPGWHSHTQGTLGFPSPGEPGPREGAFPAAQVQRRRVKKRHRRQRRSHVLEEGDDGDRLYSSMSRAFLYRLWKGNVSSKMLNPRLQKAMKDYLTANKHGVRFRGKREAGLSRAQLLCQLRSRARVRTLDGTEAPFSALGWRRLVPAVPLSQLHPRGLRSCAVVMSAGAILNSSLGEEIDSHDAVLRFNSAPTRGYEKDVGNKTTIRIINSQILTNPSHHFIDSSLYKDVILVAWDPAPYSANLNLWYKKPDYNLFTPYIQHRQRNPNQPFYILHPKFIWQLWDIIQENTKEKIQPNPPSSGFIGILIMMSMCREVHVYEYIPSVRQTELCHYHELYYDAACTLGAYHPLLYEKLLVQRLNMGTQGDLHRKGKVVLPGFQAVHCPAPSPVIPHS.

Residues 1-11 (MKPHLKQWRQR) are Cytoplasmic-facing. A helical; Signal-anchor for type II membrane protein transmembrane segment spans residues 12–32 (MLFGIFAWGLLFLLIFIYFTD). Topologically, residues 33–529 (SNPAEPVPSS…PAPSPVIPHS (497 aa)) are lumenal. An O-linked (GalNAc...) serine glycan is attached at serine 69. N-linked (GlcNAc...) asparagine glycosylation occurs at asparagine 211. 3 disulfides stabilise this stretch: cysteine 253–cysteine 519, cysteine 296–cysteine 448, and cysteine 466–cysteine 477.

Belongs to the glycosyltransferase 29 family. Post-translationally, O-glycosylated. As to expression, weakly expressed in some tissues, such as small intestine, colon and fetal brain.

It localises to the golgi apparatus. It is found in the golgi stack membrane. It catalyses the reaction a beta-D-galactoside + CMP-N-acetyl-beta-neuraminate = an N-acetyl-alpha-neuraminyl-(2-&gt;6)-beta-D-galactosyl derivative + CMP + H(+). Functionally, transfers sialic acid from the donor of substrate CMP-sialic acid to galactose containing acceptor substrates. Has alpha-2,6-sialyltransferase activity toward oligosaccharides that have the Gal-beta-1,4-GlcNAc sequence at the non-reducing end of their carbohydrate groups, but it has weak or no activities toward glycoproteins and glycolipids. The polypeptide is Beta-galactoside alpha-2,6-sialyltransferase 2 (ST6GAL2) (Homo sapiens (Human)).